A 450-amino-acid chain; its full sequence is 23S rRNA (uracil(1939)-C(5))-methyltransferase RlmD (450 aa).

The segment at 1 to 22 (MARNKGGLRFQPSGGARGPAIP) is disordered. Residues 20-78 (AIPVGKKQRLTIERLAHDGRGIAHEAGMTWFVSGGLPGEELEARVLGARSKVVDARSER) enclose the TRAM domain. Residues Cys91, Cys97, Cys100, and Cys179 each contribute to the [4Fe-4S] cluster site. Residues Gln283, Phe312, Asn317, Glu333, Asp360, and Asp381 each coordinate S-adenosyl-L-methionine. Residue Cys407 is the Nucleophile of the active site.

Belongs to the class I-like SAM-binding methyltransferase superfamily. RNA M5U methyltransferase family. RlmD subfamily.

It carries out the reaction uridine(1939) in 23S rRNA + S-adenosyl-L-methionine = 5-methyluridine(1939) in 23S rRNA + S-adenosyl-L-homocysteine + H(+). Catalyzes the formation of 5-methyl-uridine at position 1939 (m5U1939) in 23S rRNA. The protein is 23S rRNA (uracil(1939)-C(5))-methyltransferase RlmD of Pseudomonas aeruginosa (strain UCBPP-PA14).